Here is a 207-residue protein sequence, read N- to C-terminus: Imidazole glycerol phosphate synthase subunit HisH (207 aa).

Residues 1-206 form the Glutamine amidotransferase type-1 domain; sequence MMIVIGYDAG…KEYVYENTAR (206 aa). The active-site Nucleophile is the Cys-79. Catalysis depends on residues His-181 and Glu-183.

As to quaternary structure, heterodimer of HisH and HisF.

It is found in the cytoplasm. The enzyme catalyses 5-[(5-phospho-1-deoxy-D-ribulos-1-ylimino)methylamino]-1-(5-phospho-beta-D-ribosyl)imidazole-4-carboxamide + L-glutamine = D-erythro-1-(imidazol-4-yl)glycerol 3-phosphate + 5-amino-1-(5-phospho-beta-D-ribosyl)imidazole-4-carboxamide + L-glutamate + H(+). The catalysed reaction is L-glutamine + H2O = L-glutamate + NH4(+). The protein operates within amino-acid biosynthesis; L-histidine biosynthesis; L-histidine from 5-phospho-alpha-D-ribose 1-diphosphate: step 5/9. IGPS catalyzes the conversion of PRFAR and glutamine to IGP, AICAR and glutamate. The HisH subunit catalyzes the hydrolysis of glutamine to glutamate and ammonia as part of the synthesis of IGP and AICAR. The resulting ammonia molecule is channeled to the active site of HisF. The polypeptide is Imidazole glycerol phosphate synthase subunit HisH (Streptococcus gordonii (strain Challis / ATCC 35105 / BCRC 15272 / CH1 / DL1 / V288)).